Consider the following 535-residue polypeptide: Solute carrier family 22 member 7 (535 aa).

A run of 12 helical transmembrane segments spans residues 21-41 (LVLMALPRMLLPMHFLLPVFM), 144-164 (ITSTCFFIGVLVGAVVYGYLS), 178-198 (VSSLVLGLMSAASINYIMFVV), 202-222 (LTGSALAGFTIIVLPLELEWL), 232-252 (VISTVFWSGGVLLLALVGYLI), 257-277 (WLLLAATLPCVPGIISIWWVP), 344-364 (ISLCCMMVWFGVNFSYYGLTL), 375-395 (QTQLLFGAVELPSKIMVYFLV), 402-422 (LTEAGMLLGAALTFGTSLLVS), 429-449 (ITALVVVGKAFSEAAFTTAYL), 464-484 (LGLTALMGRLGASLAPLAALL), and 489-509 (LLLPKVAYGGIALVAACTALL).

The protein belongs to the major facilitator (TC 2.A.1) superfamily. Organic cation transporter (TC 2.A.1.19) family. Expressed in liver and kidney. Expressed at low levels in adipose tissue. Expressed in fetal liver. In kidney, expressed at the brush border of the proximal tubule S3 segment (S3) in the outer stripe and medullary rays. In kidney, expression is higher in female than male.

It is found in the basolateral cell membrane. Its subcellular location is the apical cell membrane. It localises to the cell membrane. The catalysed reaction is orotate(out) + L-glutamate(in) = orotate(in) + L-glutamate(out). It catalyses the reaction 3',5'-cyclic GMP(in) = 3',5'-cyclic GMP(out). It carries out the reaction GMP(in) = GMP(out). The enzyme catalyses 2'-deoxyguanosine(in) = 2'-deoxyguanosine(out). The catalysed reaction is GDP(in) = GDP(out). It catalyses the reaction guanosine(in) = guanosine(out). It carries out the reaction GTP(in) = GTP(out). The enzyme catalyses 3',5'-cyclic AMP(in) = 3',5'-cyclic AMP(out). The catalysed reaction is creatinine(in) = creatinine(out). It catalyses the reaction prostaglandin E2(out) = prostaglandin E2(in). It carries out the reaction 2-oxoglutarate(in) = 2-oxoglutarate(out). The enzyme catalyses glutarate(in) = glutarate(out). The catalysed reaction is urate(out) = urate(in). It catalyses the reaction estrone 3-sulfate(out) = estrone 3-sulfate(in). Its function is as follows. Functions as a Na(+)-independent bidirectional multispecific transporter. Contributes to the renal and hepatic elimination of endogenous organic compounds from the systemic circulation into the urine and bile, respectively. Capable of transporting a wide range of purine and pyrimidine nucleobases, nucleosides, and nucleotides with cGMP, 2'deoxyguanosine and GMP being the preferred substrates. Functions as a pH- and chloride-independent cGMP bidirectional facilitative transporter that can regulate both intracellular and extracellular levels of cGMP and may be involved in cGMP signaling pathways. Mediates orotate/glutamate bidirectional exchange and most likely display a physiological role in hepatic release of glutamate into the blood. Involved in renal secretion and possible reabsorption of creatinine. Able to uptake prostaglandin E2 (PGE2) and may contribute to PGE2 renal excretion. Also transports alpha-ketoglutarate and urate. Apart from the orotate/glutamate exchange, the counterions for the uptake of other SLC22A7/OAT2 substrates remain to be identified. This is Solute carrier family 22 member 7 from Rattus norvegicus (Rat).